The sequence spans 393 residues: Lipid-A-disaccharide synthase (393 aa).

Belongs to the LpxB family.

It catalyses the reaction a lipid X + a UDP-2-N,3-O-bis[(3R)-3-hydroxyacyl]-alpha-D-glucosamine = a lipid A disaccharide + UDP + H(+). The protein operates within bacterial outer membrane biogenesis; LPS lipid A biosynthesis. In terms of biological role, condensation of UDP-2,3-diacylglucosamine and 2,3-diacylglucosamine-1-phosphate to form lipid A disaccharide, a precursor of lipid A, a phosphorylated glycolipid that anchors the lipopolysaccharide to the outer membrane of the cell. The chain is Lipid-A-disaccharide synthase from Colwellia psychrerythraea (strain 34H / ATCC BAA-681) (Vibrio psychroerythus).